The primary structure comprises 165 residues: Cyanate hydratase (165 aa).

Active-site residues include Arg106, Glu109, and Ser132.

The protein belongs to the cyanase family.

It catalyses the reaction cyanate + hydrogencarbonate + 3 H(+) = NH4(+) + 2 CO2. Its function is as follows. Catalyzes the reaction of cyanate with bicarbonate to produce ammonia and carbon dioxide. The polypeptide is Cyanate hydratase (Laccaria bicolor (strain S238N-H82 / ATCC MYA-4686) (Bicoloured deceiver)).